We begin with the raw amino-acid sequence, 259 residues long: 3-oxo-5-alpha-steroid 4-dehydrogenase 1 (259 aa).

A run of 5 helical transmembrane segments spans residues 10 to 30 (LCLL…SIVG), 86 to 106 (VLLA…PVLI), 111 to 131 (PTLL…GYVQ), 146 to 166 (VTHP…VINI), and 206 to 226 (WCGF…LFTL).

The protein belongs to the steroid 5-alpha reductase family. As to expression, liver and prostate (at a low level).

Its subcellular location is the microsome membrane. It localises to the endoplasmic reticulum membrane. The catalysed reaction is a 3-oxo-5alpha-steroid + NADP(+) = a 3-oxo-Delta(4)-steroid + NADPH + H(+). It catalyses the reaction 5alpha-pregnane-3,20-dione + NADP(+) = progesterone + NADPH + H(+). The enzyme catalyses 17beta-hydroxy-5alpha-androstan-3-one + NADP(+) = testosterone + NADPH + H(+). It carries out the reaction androst-4-ene-3,17-dione + NADPH + H(+) = 5alpha-androstan-3,17-dione + NADP(+). Functionally, converts testosterone into 5-alpha-dihydrotestosterone and progesterone or corticosterone into their corresponding 5-alpha-3-oxosteroids. It plays a central role in sexual differentiation and androgen physiology. This is 3-oxo-5-alpha-steroid 4-dehydrogenase 1 from Rattus norvegicus (Rat).